Reading from the N-terminus, the 382-residue chain is Dual-specificity RNA methyltransferase RlmN (382 aa).

Catalysis depends on E94, which acts as the Proton acceptor. Residues 100 to 336 form the Radical SAM core domain; sequence EANRGTLCVS…NTITRKTRGD (237 aa). C107 and C342 form a disulfide bridge. C114, C118, and C121 together coordinate [4Fe-4S] cluster. Residues 168 to 169, S200, 222 to 224, and N299 each bind S-adenosyl-L-methionine; these read GE and SLH. C342 acts as the S-methylcysteine intermediate in catalysis.

This sequence belongs to the radical SAM superfamily. RlmN family. [4Fe-4S] cluster is required as a cofactor.

The protein localises to the cytoplasm. The enzyme catalyses adenosine(2503) in 23S rRNA + 2 reduced [2Fe-2S]-[ferredoxin] + 2 S-adenosyl-L-methionine = 2-methyladenosine(2503) in 23S rRNA + 5'-deoxyadenosine + L-methionine + 2 oxidized [2Fe-2S]-[ferredoxin] + S-adenosyl-L-homocysteine. The catalysed reaction is adenosine(37) in tRNA + 2 reduced [2Fe-2S]-[ferredoxin] + 2 S-adenosyl-L-methionine = 2-methyladenosine(37) in tRNA + 5'-deoxyadenosine + L-methionine + 2 oxidized [2Fe-2S]-[ferredoxin] + S-adenosyl-L-homocysteine. Functionally, specifically methylates position 2 of adenine 2503 in 23S rRNA and position 2 of adenine 37 in tRNAs. m2A2503 modification seems to play a crucial role in the proofreading step occurring at the peptidyl transferase center and thus would serve to optimize ribosomal fidelity. In Legionella pneumophila (strain Lens), this protein is Dual-specificity RNA methyltransferase RlmN.